Reading from the N-terminus, the 434-residue chain is Attachment protein G3P (434 aa).

A signal peptide spans 1 to 19 (MKRKIIAISLFLYIPLSNA). Residues 20–130 (DNWESITKSY…IQRSVPDEEP (111 aa)) form an N1 region. 3 cysteine pairs are disulfide-bonded: C63–C98, C139–C167, and C177–C184. The segment at 89 to 107 (QFRLVTGDTCVYNGSPGEK) is G1 (Gly-rich linker). Positions 132–200 (EQTPEEICEA…PTGYVPESGE (69 aa)) are N2. The tract at residues 191 to 260 (PTGYVPESGE…GSSGGSTGKS (70 aa)) is disordered. The segment at 209-258 (GDTGGTGEGGSDTGGDTGGGDTGGGSTGGDTGGSSGGGSSGGGSSGGSTG) is gly-rich linker. Gly residues predominate over residues 211 to 257 (TGGTGEGGSDTGGDTGGGDTGGGSTGGDTGGSSGGGSSGGGSSGGST). CT stretches follow at residues 252 to 434 (SSGG…KGEQ) and 259 to 434 (KSLT…KGEQ). A helical membrane pass occupies residues 408 to 429 (VLSWVMYCLTFWYVFQSVTSLL).

It belongs to the inovirus G3P protein family. As to quaternary structure, interacts with G6P; this interaction is required for proper integration of G3P and G6P into the virion. Interacts with G8P. Interacts with the tip of the host pilus. Interacts (via N-terminus) with host TolA.

The protein resides in the virion. It is found in the host membrane. In terms of biological role, plays essential roles both in the penetration of the viral genome into the bacterial host via pilus retraction and in the extrusion process. During the initial step of infection, G3P mediates adsorption of the phage to its primary receptor, the tip of host F-pilus. Attachment of the phage causes pilus retraction bringing the viral particle into close proximity of the host cell inner membrane. Subsequent interaction with the host entry receptors TolA (low affinity) and penetration of the viral DNA into the host cytoplasm. In the extrusion process, G3P mediates the release of the membrane-anchored virion from the cell via its C-terminal domain. In Escherichia coli (Bacteriophage IKe), this protein is Attachment protein G3P (III).